The sequence spans 288 residues: Phenazine biosynthesis-like domain-containing protein 2 (288 aa).

The active site involves Glu46.

Belongs to the PhzF family.

This Mus musculus (Mouse) protein is Phenazine biosynthesis-like domain-containing protein 2 (Pbld2).